The primary structure comprises 251 residues: Esterase mlcF (251 aa).

Catalysis depends on charge relay system residues serine 126, aspartate 193, and histidine 221.

This sequence belongs to the LovG family.

The catalysed reaction is dihydro-ML-236C-[compactin nonaketide synthase] + H2O = holo-[compactin nonaketide synthase] + dihydro-ML-236C carboxylate + H(+). It participates in polyketide biosynthesis. Esterase; part of the gene cluster that mediates the biosynthesis of compactin, also known as mevastatin or ML-236B, and which acts as a potent competitive inhibitor of HMG-CoA reductase. Compactin biosynthesis is performed in two stages. The first stage is catalyzed by the nonaketide synthase mlcA, which belongs to type I polyketide synthases and catalyzes the iterative nine-step formation of the polyketide. This PKS stage is completed by the action of dehydrogenase mlcG, which catalyzes the NADPH-dependent reduction of the unsaturated tetra-, penta- and heptaketide intermediates that arise during the mlcA-mediated biosynthesis of the nonaketide chain and leads to dihydro-ML-236C carboxylate. Covalently bound dihydro-ML-236C carboxylate is released from mlcA by the mlcF esterase. Conversion of dihydro-ML-236C carboxylate into ML-236A carboxylate is subsequently performed with the participation of molecular oxygen and P450 monoogygenase mlcC. Finally, mlcH performs the conversion of ML-236A carboxylate to ML-236B/compactin carboxylate through the addition of the side-chain diketide moiety produced by the diketide synthase mlcB. The sequence is that of Esterase mlcF from Penicillium citrinum.